We begin with the raw amino-acid sequence, 1062 residues long: NACHT, LRR and PYD domains-containing protein 2 (1062 aa).

Positions 1 to 94 (MVSSAQMGFN…SERAKDEVRE (94 aa)) constitute a Pyrin domain. Residues 207-526 (YTVVLYGPAG…LEKEEEEDRD (320 aa)) enclose the NACHT domain. 213–220 (GPAGLGKT) serves as a coordination point for ATP. The residue at position 671 (Ser671) is a Phosphoserine. LRR repeat units follow at residues 812–832 (SLTC…KLLY), 841–861 (FLQR…KDLA), 869–889 (ELTH…KFLC), 898–918 (KLQT…CDLT), 926–946 (SLLC…KFLC), 955–976 (NLRC…DLCS), 983–1003 (SLVT…KMLF), and 1010–1033 (SGTL…LLEE).

This sequence belongs to the NLRP family. In terms of assembly, interacts with CHUK. Interacts with IKBKB. Interacts with IKBKG. Interacts with MEFV. Interacts with PYCARD. Interacts (via pyrin domain) with PYDC2. Interacts with CARD8. In terms of tissue distribution, expressed at high levels in lung, placenta and thymus and at lower levels in ovary, intestine and brain. Highly abundant in oocytes and early embryos, however poorly expressed in somatic tissues such as brain, kidney, liver and spinal cord.

The protein localises to the cytoplasm. In terms of biological role, suppresses TNF- and CD40-induced NFKB1 activity at the level of the IKK complex, by inhibiting NFKBIA degradation induced by TNF. When associated with PYCARD, activates CASP1, leading to the secretion of mature pro-inflammatory cytokine IL1B. May be a component of the inflammasome, a protein complex which also includes PYCARD, CARD8 and CASP1 and whose function would be the activation of pro-inflammatory caspases. The chain is NACHT, LRR and PYD domains-containing protein 2 (NLRP2) from Homo sapiens (Human).